The following is a 143-amino-acid chain: Transcriptional regulator MraZ (143 aa).

2 SpoVT-AbrB domains span residues 5–47 (EYDH…TLDE) and 76–119 (AVEV…DRET).

Belongs to the MraZ family. As to quaternary structure, forms oligomers.

It is found in the cytoplasm. Its subcellular location is the nucleoid. The protein is Transcriptional regulator MraZ of Staphylococcus aureus (strain Mu3 / ATCC 700698).